Here is a 310-residue protein sequence, read N- to C-terminus: Alpha/beta hydrolase domain-containing protein 17A (310 aa).

The tract at residues 38–61 is disordered; it reads VPEPEPGPGGAGAAPSGPLRTSAA. Residues Ser190, Asp255, and His284 each act as charge relay system in the active site. Ser307 is modified (phosphoserine).

It belongs to the AB hydrolase superfamily. ABHD17 family. Post-translationally, palmitoylated on cysteine residues located in a cysteine cluster at the N-terminus which promotes membrane localization. Palmitoylation is required for post-synaptic localization and for depalmitoylating activity towards DLG4/PSD95. Expressed in brain (at protein level). Expressed in hippocampal neurons.

It localises to the cell membrane. The protein localises to the recycling endosome membrane. It is found in the cell projection. The protein resides in the dendritic spine. Its subcellular location is the postsynaptic density membrane. The enzyme catalyses S-hexadecanoyl-L-cysteinyl-[protein] + H2O = L-cysteinyl-[protein] + hexadecanoate + H(+). In terms of biological role, hydrolyzes fatty acids from S-acylated cysteine residues in proteins. Has depalmitoylating activity towards NRAS. Has depalmitoylating activity towards DLG4/PSD95. May have depalmitoylating activity towards MAP6. In Rattus norvegicus (Rat), this protein is Alpha/beta hydrolase domain-containing protein 17A.